A 97-amino-acid polypeptide reads, in one-letter code: Large ribosomal subunit protein bL27 (97 aa).

A propeptide spanning residues 1–12 (MLKMNLANLQLF) is cleaved from the precursor. The interval 14-37 (HKKGGGSTSNGRDSQAKRLGAKAA) is disordered.

The protein belongs to the bacterial ribosomal protein bL27 family. The N-terminus is cleaved by ribosomal processing cysteine protease Prp.

This is Large ribosomal subunit protein bL27 from Streptococcus uberis (strain ATCC BAA-854 / 0140J).